Reading from the N-terminus, the 456-residue chain is Alcohol acyltransferase 16 (456 aa).

Catalysis depends on proton acceptor residues H167 and D382.

It belongs to the plant acyltransferase family. As to expression, expressed in fruit.

The enzyme catalyses 3-(methylsulfanyl)propanoyl-CoA + butan-1-ol = butyl 3-(methylsulfanyl)propanoate + CoA. The catalysed reaction is ethanol + benzoyl-CoA = ethyl benzoate + CoA. It carries out the reaction butan-1-ol + benzoyl-CoA = butyl benzoate + CoA. It catalyses the reaction 2-(methylsulfanyl)acetyl-CoA + butan-1-ol = butyl 2-(methylsulfanyl)acetate + CoA. Functionally, involved in the biosynthesis of volatile esters which confer kiwifruit flavor. Alcohol acyl transferase that can use a wide range of alcohols as substrate to produce esters. Exhibits benzoyl-CoA:alcohol O-acyltransferase activity. The chain is Alcohol acyltransferase 16 from Actinidia chinensis var. chinensis (Chinese soft-hair kiwi).